The sequence spans 227 residues: Cytochrome c oxidase subunit 2 (227 aa).

Over 1 to 26 (MATWSNLNLQNSSSPLMEQLIFFHDH) the chain is Mitochondrial intermembrane. Residues 27–48 (TLMILLMITVLVAYIMSMLFFN) form a helical membrane-spanning segment. Over 49 to 62 (LYTNRFLLEGQTIE) the chain is Mitochondrial matrix. Residues 63–82 (IIWTILPAITLIFIALPSLR) form a helical membrane-spanning segment. The Mitochondrial intermembrane portion of the chain corresponds to 83–227 (LLYLLDESMD…FINWIKNYSS (145 aa)). Cu cation is bound by residues H160, C195, E197, C199, H203, and M206. E197 lines the Mg(2+) pocket.

The protein belongs to the cytochrome c oxidase subunit 2 family. As to quaternary structure, component of the cytochrome c oxidase (complex IV, CIV), a multisubunit enzyme composed of a catalytic core of 3 subunits and several supernumerary subunits. The complex exists as a monomer or a dimer and forms supercomplexes (SCs) in the inner mitochondrial membrane with ubiquinol-cytochrome c oxidoreductase (cytochrome b-c1 complex, complex III, CIII). Cu cation is required as a cofactor.

It is found in the mitochondrion inner membrane. The catalysed reaction is 4 Fe(II)-[cytochrome c] + O2 + 8 H(+)(in) = 4 Fe(III)-[cytochrome c] + 2 H2O + 4 H(+)(out). Its function is as follows. Component of the cytochrome c oxidase, the last enzyme in the mitochondrial electron transport chain which drives oxidative phosphorylation. The respiratory chain contains 3 multisubunit complexes succinate dehydrogenase (complex II, CII), ubiquinol-cytochrome c oxidoreductase (cytochrome b-c1 complex, complex III, CIII) and cytochrome c oxidase (complex IV, CIV), that cooperate to transfer electrons derived from NADH and succinate to molecular oxygen, creating an electrochemical gradient over the inner membrane that drives transmembrane transport and the ATP synthase. Cytochrome c oxidase is the component of the respiratory chain that catalyzes the reduction of oxygen to water. Electrons originating from reduced cytochrome c in the intermembrane space (IMS) are transferred via the dinuclear copper A center (CU(A)) of subunit 2 and heme A of subunit 1 to the active site in subunit 1, a binuclear center (BNC) formed by heme A3 and copper B (CU(B)). The BNC reduces molecular oxygen to 2 water molecules using 4 electrons from cytochrome c in the IMS and 4 protons from the mitochondrial matrix. The protein is Cytochrome c oxidase subunit 2 (COII) of Acheta domesticus (House cricket).